Reading from the N-terminus, the 1112-residue chain is DNA polymerase II large subunit (1112 aa).

It belongs to the archaeal DNA polymerase II family. Heterodimer of a large subunit and a small subunit.

It carries out the reaction DNA(n) + a 2'-deoxyribonucleoside 5'-triphosphate = DNA(n+1) + diphosphate. The enzyme catalyses Exonucleolytic cleavage in the 3'- to 5'-direction to yield nucleoside 5'-phosphates.. Possesses two activities: a DNA synthesis (polymerase) and an exonucleolytic activity that degrades single-stranded DNA in the 3'- to 5'-direction. Has a template-primer preference which is characteristic of a replicative DNA polymerase. The chain is DNA polymerase II large subunit from Cenarchaeum symbiosum (strain A).